The following is a 441-amino-acid chain: Protein C-ets-1 (441 aa).

An N6-acetyllysine; alternate mark is found at Lys8 and Lys15. Glycyl lysine isopeptide (Lys-Gly) (interchain with G-Cter in SUMO2); alternate cross-links involve residues Lys8 and Lys15. Lys15 participates in a covalent cross-link: Glycyl lysine isopeptide (Lys-Gly) (interchain with G-Cter in SUMO); alternate. Residue Thr38 is modified to Phosphothreonine; by MAPK. Positions 51–136 constitute a PNT domain; the sequence is ATFSGFTKEQ…EHLEILQKED (86 aa). The activation domain; required for transcription activation stretch occupies residues 130–243; the sequence is EILQKEDVKP…DNMCMGRASR (114 aa). Lys138 participates in a covalent cross-link: Glycyl lysine isopeptide (Lys-Gly) (interchain with G-Cter in SUMO2). The residue at position 223 (Tyr223) is a Phosphotyrosine. A Glycyl lysine isopeptide (Lys-Gly) (interchain with G-Cter in SUMO) cross-link involves residue Lys227. Phosphoserine occurs at positions 251 and 254. Thr265 carries the phosphothreonine modification. Phosphoserine is present on residues Ser267, Ser270, Ser282, and Ser285. Positions 304–312 are helix HI-1; it reads FKDYVRDRA. Lys305 carries the post-translational modification N6-acetyllysine. A helix HI-2 region spans residues 323–330; that stretch reads AAALAGYT. The segment at residues 335–415 is a DNA-binding region (ETS); it reads IQLWQFLLEL…AGKRYVYRFV (81 aa). The segment at 418-422 is helix H4; the sequence is LQSLL. Residues 426 to 432 form a helix H5 region; that stretch reads PEELHAM.

Belongs to the ETS family. As to quaternary structure, binds DNA as a homodimer; homodimerization is required for transcription activation. Interacts with MAF and MAFB. Interacts with PAX5; the interaction alters DNA-binding properties. Interacts with DAXX. Interacts with UBE2I. Interacts with SP100; the interaction is direct and modulates ETS1 transcriptional activity. In terms of processing, sumoylated on Lys-15 and Lys-227, preferentially with SUMO2; which inhibits transcriptional activity. Ubiquitinated; which induces proteasomal degradation. Post-translationally, phosphorylation at Ser-251, Ser-282 and Ser-285 by CaMK2/CaMKII in response to calcium signaling decreases affinity for DNA: an increasing number of phosphoserines causes DNA-binding to become progressively weaker.

The protein resides in the nucleus. Its subcellular location is the cytoplasm. Its activity is regulated as follows. Autoinhibited by a module composed of four alpha helices (HI-1, HI-2, H4, and H5) that flank the DNA-binding ETS domain, reducing the affinity for DNA. Phosphorylation by CaMK2/CaMKII in response to calcium signaling decreases affinity for DNA. Transcription factor. Directly controls the expression of cytokine and chemokine genes in a wide variety of different cellular contexts. May control the differentiation, survival and proliferation of lymphoid cells. May also regulate angiogenesis through regulation of expression of genes controlling endothelial cell migration and invasion. The chain is Protein C-ets-1 (Ets1) from Rattus norvegicus (Rat).